The primary structure comprises 393 residues: Bifunctional enzyme IspD/IspF (393 aa).

The segment at 1 to 234 (MTISQRTAAI…ARLAAQLGDI (234 aa)) is 2-C-methyl-D-erythritol 4-phosphate cytidylyltransferase. Residues 235–393 (RTGTGYDVHA…SATIRLPWSA (159 aa)) form a 2-C-methyl-D-erythritol 2,4-cyclodiphosphate synthase region. A divalent metal cation-binding residues include aspartate 241 and histidine 243. Residues 241-243 (DVH) and 267-268 (HS) contribute to the 4-CDP-2-C-methyl-D-erythritol 2-phosphate site. Residue histidine 275 participates in a divalent metal cation binding. 4-CDP-2-C-methyl-D-erythritol 2-phosphate-binding positions include 289-291 (DIG), 365-368 (TTSE), phenylalanine 372, and arginine 375.

In the N-terminal section; belongs to the IspD/TarI cytidylyltransferase family. IspD subfamily. It in the C-terminal section; belongs to the IspF family. The cofactor is a divalent metal cation.

The enzyme catalyses 2-C-methyl-D-erythritol 4-phosphate + CTP + H(+) = 4-CDP-2-C-methyl-D-erythritol + diphosphate. It catalyses the reaction 4-CDP-2-C-methyl-D-erythritol 2-phosphate = 2-C-methyl-D-erythritol 2,4-cyclic diphosphate + CMP. It participates in isoprenoid biosynthesis; isopentenyl diphosphate biosynthesis via DXP pathway; isopentenyl diphosphate from 1-deoxy-D-xylulose 5-phosphate: step 2/6. The protein operates within isoprenoid biosynthesis; isopentenyl diphosphate biosynthesis via DXP pathway; isopentenyl diphosphate from 1-deoxy-D-xylulose 5-phosphate: step 4/6. Bifunctional enzyme that catalyzes the formation of 4-diphosphocytidyl-2-C-methyl-D-erythritol from CTP and 2-C-methyl-D-erythritol 4-phosphate (MEP) (IspD), and catalyzes the conversion of 4-diphosphocytidyl-2-C-methyl-D-erythritol 2-phosphate (CDP-ME2P) to 2-C-methyl-D-erythritol 2,4-cyclodiphosphate (ME-CPP) with a corresponding release of cytidine 5-monophosphate (CMP) (IspF). This Bradyrhizobium sp. (strain BTAi1 / ATCC BAA-1182) protein is Bifunctional enzyme IspD/IspF.